The primary structure comprises 1396 residues: ATP-dependent helicase/nuclease subunit A (1396 aa).

Positions 1–25 (MNREALCHDDPIGHDRLRPDSIPRD) are disordered. Residues 26-532 (PKWTDEQWQA…IDLAKNFRSR (507 aa)) form the UvrD-like helicase ATP-binding domain. ATP is bound at residue 47–54 (AAAGAGKT). 2 disordered regions span residues 590–649 (DADG…GQPT) and 1171–1205 (HSPE…PSPD). Positions 615-920 (HKNIAKAGES…RIMSIHKSKG (306 aa)) constitute a UvrD-like helicase C-terminal domain. Over residues 1181–1199 (TPPSLEIPPSLETPPSLET) the composition is skewed to low complexity.

Belongs to the helicase family. AddA subfamily. Heterodimer of AddA and AddB/RexB. The cofactor is Mg(2+).

The enzyme catalyses Couples ATP hydrolysis with the unwinding of duplex DNA by translocating in the 3'-5' direction.. It carries out the reaction ATP + H2O = ADP + phosphate + H(+). The heterodimer acts as both an ATP-dependent DNA helicase and an ATP-dependent, dual-direction single-stranded exonuclease. Recognizes the chi site generating a DNA molecule suitable for the initiation of homologous recombination. The AddA nuclease domain is required for chi fragment generation; this subunit has the helicase and 3' -&gt; 5' nuclease activities. This Heliobacterium modesticaldum (strain ATCC 51547 / Ice1) protein is ATP-dependent helicase/nuclease subunit A.